An 89-amino-acid chain; its full sequence is Small ribosomal subunit protein uS15 (89 aa).

The protein belongs to the universal ribosomal protein uS15 family. As to quaternary structure, part of the 30S ribosomal subunit. Forms a bridge to the 50S subunit in the 70S ribosome, contacting the 23S rRNA.

In terms of biological role, one of the primary rRNA binding proteins, it binds directly to 16S rRNA where it helps nucleate assembly of the platform of the 30S subunit by binding and bridging several RNA helices of the 16S rRNA. Functionally, forms an intersubunit bridge (bridge B4) with the 23S rRNA of the 50S subunit in the ribosome. This Orientia tsutsugamushi (strain Boryong) (Rickettsia tsutsugamushi) protein is Small ribosomal subunit protein uS15.